The sequence spans 365 residues: Pre-mRNA-splicing factor srp2 (365 aa).

RRM domains are found at residues 6–69 (LFVG…RIVV) and 100–166 (LIVE…AVTL). A disordered region spans residues 166-365 (LREDPDAANE…SAEGQVAAEW (200 aa)). A compositionally biased stretch (basic residues) spans 184 to 194 (FRSRSPPARRR). A phosphoserine mark is found at Ser-186, Ser-188, Ser-276, Ser-294, Ser-296, Ser-298, and Ser-308. The span at 195 to 307 (YRDDYRRGGD…SPRRDREENR (113 aa)) shows a compositional bias: basic and acidic residues. Positions 316 to 332 (SYSAAPEASMESSAPTE) are enriched in low complexity. The span at 341–353 (EEQQPLQNHSDVG) shows a compositional bias: polar residues.

Belongs to the splicing factor SR family. In terms of processing, extensively phosphorylated on serine residues in the RS domain.

It localises to the nucleus. Functionally, has a role in pre-mRNA splicing where it is involved in spliceosome assembly. The polypeptide is Pre-mRNA-splicing factor srp2 (srp2) (Schizosaccharomyces pombe (strain 972 / ATCC 24843) (Fission yeast)).